A 533-amino-acid polypeptide reads, in one-letter code: Adenosine deaminase (533 aa).

The signal sequence occupies residues Met1–Pro19.

It belongs to the metallo-dependent hydrolases superfamily. Adenosine and AMP deaminases family. ADGF subfamily. Requires Zn(2+) as cofactor. Post-translationally, proteolytically cleaved by human mast cell tryptase and chymase. Female salivary gland (at protein level).

Its subcellular location is the secreted. It carries out the reaction adenosine + H2O + H(+) = inosine + NH4(+). The enzyme catalyses 2'-deoxyadenosine + H2O + H(+) = 2'-deoxyinosine + NH4(+). Its function is as follows. Catalyzes the deamination of adenosine to inosine and deoxyadenosine to deoxyinosine. Induces degranulation of host mast cells, and secretion of tryptase and IL6. Modulates enzymatic activities of human tryptase and chymase. Induces release of cytokines, such as IL1B, IL6, TNF, CCL2, IFN-beta (INFB1) and ISG15, from host monocytes and macrophages. Activates host NF-kappa-B signaling pathway in TAK1/MAP3K7-dependent manner. (Microbial infection) Promotes replication of dengue virus type 2 in host cells probably via modulation of cytokine production in host macrophages and monocytes. In Aedes albopictus (Asian tiger mosquito), this protein is Adenosine deaminase.